The primary structure comprises 410 residues: LL-diaminopimelate aminotransferase (410 aa).

Residues tyrosine 15 and glycine 42 each coordinate substrate. Residues tyrosine 72, 108 to 109, tyrosine 132, asparagine 188, tyrosine 219, and 247 to 249 each bind pyridoxal 5'-phosphate; these read AK and SFS. Residues lysine 109, tyrosine 132, and asparagine 188 each contribute to the substrate site. An N6-(pyridoxal phosphate)lysine modification is found at lysine 250. The pyridoxal 5'-phosphate site is built by arginine 258 and asparagine 293. Substrate contacts are provided by asparagine 293 and arginine 389.

It belongs to the class-I pyridoxal-phosphate-dependent aminotransferase family. LL-diaminopimelate aminotransferase subfamily. As to quaternary structure, homodimer. Pyridoxal 5'-phosphate is required as a cofactor.

The catalysed reaction is (2S,6S)-2,6-diaminopimelate + 2-oxoglutarate = (S)-2,3,4,5-tetrahydrodipicolinate + L-glutamate + H2O + H(+). Its pathway is amino-acid biosynthesis; L-lysine biosynthesis via DAP pathway; LL-2,6-diaminopimelate from (S)-tetrahydrodipicolinate (aminotransferase route): step 1/1. In terms of biological role, involved in the synthesis of meso-diaminopimelate (m-DAP or DL-DAP), required for both lysine and peptidoglycan biosynthesis. Catalyzes the direct conversion of tetrahydrodipicolinate to LL-diaminopimelate. Can also use m-DAP instead of LL-DAP as the amino-group donor. This is LL-diaminopimelate aminotransferase from Bacteroides fragilis (strain ATCC 25285 / DSM 2151 / CCUG 4856 / JCM 11019 / LMG 10263 / NCTC 9343 / Onslow / VPI 2553 / EN-2).